We begin with the raw amino-acid sequence, 112 residues long: UPF0060 membrane protein Mpe_A1656 (112 aa).

The next 4 helical transmembrane spans lie at 9–29 (GLFFVTAVAEIVGCYLPWLVL), 34–54 (SAWLLVPAAASLAVFAWLLTL), 65–85 (AYGGVYVVVALLWLWRVDGVV), and 91–111 (LVGGAICLAGMAIIALQPRAA).

Belongs to the UPF0060 family.

The protein resides in the cell inner membrane. This chain is UPF0060 membrane protein Mpe_A1656, found in Methylibium petroleiphilum (strain ATCC BAA-1232 / LMG 22953 / PM1).